A 92-amino-acid polypeptide reads, in one-letter code: Phospholemman (92 aa).

Residues 1–20 (MASPGHILIVCVCLLSMASA) form the signal peptide. Residues 21 to 35 (EAPQEPDPFTYDYHT) lie on the Extracellular side of the membrane. The helical transmembrane segment at 36–56 (LRIGGLTIAGILFILGILIIL) threads the bilayer. The Cytoplasmic portion of the chain corresponds to 57-92 (SKRCRCKFNQQQRTGEPDEEEGTFRSSIRRLSTRRR). Cys60 carries S-palmitoyl cysteine lipidation. Position 62 is an S-glutathionyl cysteine; alternate (Cys62). Cys62 is lipidated: S-palmitoyl cysteine; alternate. Residues 66 to 92 (QQQRTGEPDEEEGTFRSSIRRLSTRRR) form a disordered region. Phosphothreonine is present on Thr79. Phosphoserine is present on Ser82. Position 83 is a phosphoserine; by PKA and PKC (Ser83). The span at 83-92 (SIRRLSTRRR) shows a compositional bias: basic residues. The residue at position 88 (Ser88) is a Phosphoserine; by PKA. The residue at position 89 (Thr89) is a Phosphothreonine; by PKC.

It belongs to the FXYD family. In terms of assembly, homotetramer. Monomer. Regulatory subunit of the sodium/potassium-transporting ATPase (NKA) which is composed of a catalytic alpha subunit, a non-catalytic beta subunit and an additional regulatory subunit. The monomeric form associates with NKA while the oligomeric form does not. Interacts with the catalytic alpha-1 subunit ATP1A1. Also interacts with the catalytic alpha-2 and alpha-3 subunits ATP1A2 and ATP1A3. Very little interaction with ATP1A1, ATP1A2 or ATP1A3 when phosphorylated at Ser-83. Interacts with the non-catalytic beta-1 subunit ATP1B1. Oxidative stress decreases interaction with ATP1A1 but increases interaction with ATP1B1. In terms of processing, major plasma membrane substrate for cAMP-dependent protein kinase (PKA) and protein kinase C (PKC) in several different tissues. Phosphorylated in response to insulin and adrenergic stimulation. Phosphorylation at Ser-88 stimulates sodium/potassium-transporting ATPase activity while the unphosphorylated form inhibits sodium/potassium-transporting ATPase activity. Phosphorylation increases tetramerization, decreases binding to ATP1A1 and reduces inhibition of ATP1A1 activity. Phosphorylation at Ser-83 leads to greatly reduced interaction with ATP1A1, ATP1A2 and ATP1A3. May be phosphorylated by DMPK. Post-translationally, palmitoylation increases half-life and stability and is enhanced upon phosphorylation at Ser-88 by PKA. In terms of tissue distribution, in adult brain, highest levels are found in the cerebellum and in the lateral, third and fourth ventricles of the choroid plexus (at protein level). Also detected in cells of a portion of the ependymal lining of the lateral ventricle on its rostral surface posterior to the caudate putamen (at protein level). Expressed in a subset of neurons which secrete gonadotropin-releasing hormone.

It is found in the cell membrane. The protein localises to the sarcolemma. It localises to the apical cell membrane. The protein resides in the membrane. Its subcellular location is the caveola. It is found in the T-tubule. Its function is as follows. Associates with and regulates the activity of the sodium/potassium-transporting ATPase (NKA) which transports Na(+) out of the cell and K(+) into the cell. Inhibits NKA activity in its unphosphorylated state and stimulates activity when phosphorylated. Reduces glutathionylation of the NKA beta-1 subunit ATP1B1, thus reversing glutathionylation-mediated inhibition of ATP1B1. Contributes to female sexual development by maintaining the excitability of neurons which secrete gonadotropin-releasing hormone. In Rattus norvegicus (Rat), this protein is Phospholemman.